Here is a 465-residue protein sequence, read N- to C-terminus: Ribulose bisphosphate carboxylase large chain (465 aa).

Lys4 is modified (N6,N6,N6-trimethyllysine). Substrate-binding residues include Asn113 and Thr163. Lys165 (proton acceptor) is an active-site residue. Position 167 (Lys167) interacts with substrate. Mg(2+)-binding residues include Lys191, Asp193, and Glu194. An N6-carboxylysine modification is found at Lys191. His284 (proton acceptor) is an active-site residue. Substrate-binding residues include Arg285, His317, and Ser369.

This sequence belongs to the RuBisCO large chain family. Type I subfamily. In terms of assembly, heterohexadecamer of 8 large chains and 8 small chains; disulfide-linked. The disulfide link is formed within the large subunit homodimers. Requires Mg(2+) as cofactor. The disulfide bond which can form in the large chain dimeric partners within the hexadecamer appears to be associated with oxidative stress and protein turnover.

The protein localises to the plastid. Its subcellular location is the chloroplast. It catalyses the reaction 2 (2R)-3-phosphoglycerate + 2 H(+) = D-ribulose 1,5-bisphosphate + CO2 + H2O. The enzyme catalyses D-ribulose 1,5-bisphosphate + O2 = 2-phosphoglycolate + (2R)-3-phosphoglycerate + 2 H(+). Its function is as follows. RuBisCO catalyzes two reactions: the carboxylation of D-ribulose 1,5-bisphosphate, the primary event in carbon dioxide fixation, as well as the oxidative fragmentation of the pentose substrate in the photorespiration process. Both reactions occur simultaneously and in competition at the same active site. This is Ribulose bisphosphate carboxylase large chain from Cornus florida (Flowering dogwood).